Reading from the N-terminus, the 697-residue chain is DNA ligase (697 aa).

NAD(+) is bound by residues aspartate 36 to aspartate 40, serine 85 to leucine 86, and glutamate 123. Catalysis depends on lysine 125, which acts as the N6-AMP-lysine intermediate. NAD(+) contacts are provided by arginine 146, glutamate 182, lysine 320, and lysine 344. Zn(2+)-binding residues include cysteine 438, cysteine 441, cysteine 456, and cysteine 462. The 79-residue stretch at proline 619 to valine 697 folds into the BRCT domain.

The protein belongs to the NAD-dependent DNA ligase family. LigA subfamily. Requires Mg(2+) as cofactor. It depends on Mn(2+) as a cofactor.

It catalyses the reaction NAD(+) + (deoxyribonucleotide)n-3'-hydroxyl + 5'-phospho-(deoxyribonucleotide)m = (deoxyribonucleotide)n+m + AMP + beta-nicotinamide D-nucleotide.. Functionally, DNA ligase that catalyzes the formation of phosphodiester linkages between 5'-phosphoryl and 3'-hydroxyl groups in double-stranded DNA using NAD as a coenzyme and as the energy source for the reaction. It is essential for DNA replication and repair of damaged DNA. This chain is DNA ligase, found in Bordetella petrii (strain ATCC BAA-461 / DSM 12804 / CCUG 43448).